A 202-amino-acid polypeptide reads, in one-letter code: Dephospho-CoA kinase (202 aa).

Residues 4–202 (FLGLTGGIAT…EGVCHKSGMS (199 aa)) enclose the DPCK domain. 12–17 (ATGKTT) serves as a coordination point for ATP.

This sequence belongs to the CoaE family.

It localises to the cytoplasm. The catalysed reaction is 3'-dephospho-CoA + ATP = ADP + CoA + H(+). The protein operates within cofactor biosynthesis; coenzyme A biosynthesis; CoA from (R)-pantothenate: step 5/5. Catalyzes the phosphorylation of the 3'-hydroxyl group of dephosphocoenzyme A to form coenzyme A. This chain is Dephospho-CoA kinase, found in Latilactobacillus sakei subsp. sakei (strain 23K) (Lactobacillus sakei subsp. sakei).